The following is a 624-amino-acid chain: MAVKQFKAESKRLLDLMINSIYTNKEIFLRELISNASDAIDKCYYRSLVDTNITFNKDDFYIRISADKENKTLTITDTGIGMTKDDLENNLGTIAKSGSFAFKSENEAKEGVDIIGQFGVGFYSAFMVADDVTVISRSVDSEEAYKWESKGVEGYTIEKCEKETPGTEIVLKIKENTDDEKYDEFLDEYKLRSLIKKYSDFIKYPIKMMTKKTRPKKDNDKETEEYLEDETLNSMVPIWRKNKNELKQEDYDNFYMDKHFGFEKPLKTIHSNVEGVVSYNTLLFIPASAPYDFYTKEFEKGLELYSNGVMIMQKCGDLLPDYFSFVQGLVDSPDLSLNISRELLQHDRQLKFIAKKIKEKIKSELLSMAKNDRENYVKFFNSFGRQLKYGVYSDFGSNKEVLQDLLMFYSSTEKKLVTLDEYVSRMKEDQKYIYYAAGESNEKIEKLPQTEVVKDKGYEILYFTDDVDEFAIKMLMKYKEKEFKSVSNKDLGFEADEKESKKETEENKDLFDFMKEVLDGKVKEVRASSRLKSHPVCLSNDGELSIEMEKVLKMMPDNNNVKAEKILEINTNHEMFNSIKAAFKDDKDKLKKYASLLYNEALLIEGLPIEDPVQFANDVASLMK.

The interval 1 to 341 (MAVKQFKAES…SPDLSLNISR (341 aa)) is a; substrate-binding. The segment at 342–550 (ELLQHDRQLK…DGELSIEMEK (209 aa)) is b. The tract at residues 551-624 (VLKMMPDNNN…FANDVASLMK (74 aa)) is c.

It belongs to the heat shock protein 90 family. In terms of assembly, homodimer.

Its subcellular location is the cytoplasm. Molecular chaperone. Has ATPase activity. The sequence is that of Chaperone protein HtpG from Clostridium acetobutylicum (strain ATCC 824 / DSM 792 / JCM 1419 / IAM 19013 / LMG 5710 / NBRC 13948 / NRRL B-527 / VKM B-1787 / 2291 / W).